The following is a 557-amino-acid chain: MRSDMIKKGFDKAPHRSLLKATGLKDEDFDKPFIAICNSFIEIIPGHKHLNEFGKLVKEAVRAAGMVPFEFNTIGVDDGIAMGHIGMRYSLPSREIIADSVETVVNAHWFDGMICIPNCDKITPGMMMAALRINIPTVFVSGGPMAAGKTSKGDVVDLSSVFEGVGAYQSGKISEEELKDIEDHGCPSCGSCSGMFTANSMNCLCEVLGLALPGNGSILAIDPRREELIKQAAEKLKILIERDIKPRDIVTEEAIDDAFALDMAMGGSTNTVLHTLALAQEAGLDYDMNRIDAVSRRVPHLCKVSPASNWHMEDIDRAGGISAILKEMSRKEGVLHLDRITATGQTLRENIAHAEIKDKEVIHSLENPHSEEGGLRILKGNLAKDGAVIKSGATEVKRFEGPCVIFNSQDEALAGIMLGKVKKGDVVIIRYEGPRGGPGMPEMLAPTSAIAGMGLGADVALLTDGRFSGASRGISVGHISPEAAAGGTIALLEQGDIVCIDVEERLLEVRVSDEELDKRKKEWKRPEPKVKTGWLGRYAQMVTSANTGAVLKIPNFD.

Residue D78 participates in Mg(2+) binding. C119 serves as a coordination point for [2Fe-2S] cluster. Mg(2+)-binding residues include D120 and K121. K121 bears the N6-carboxylysine mark. C192 is a [2Fe-2S] cluster binding site. E442 serves as a coordination point for Mg(2+). The Proton acceptor role is filled by S468.

The protein belongs to the IlvD/Edd family. In terms of assembly, homodimer. [2Fe-2S] cluster serves as cofactor. The cofactor is Mg(2+).

It carries out the reaction (2R)-2,3-dihydroxy-3-methylbutanoate = 3-methyl-2-oxobutanoate + H2O. It catalyses the reaction (2R,3R)-2,3-dihydroxy-3-methylpentanoate = (S)-3-methyl-2-oxopentanoate + H2O. It functions in the pathway amino-acid biosynthesis; L-isoleucine biosynthesis; L-isoleucine from 2-oxobutanoate: step 3/4. It participates in amino-acid biosynthesis; L-valine biosynthesis; L-valine from pyruvate: step 3/4. Functions in the biosynthesis of branched-chain amino acids. Catalyzes the dehydration of (2R,3R)-2,3-dihydroxy-3-methylpentanoate (2,3-dihydroxy-3-methylvalerate) into 2-oxo-3-methylpentanoate (2-oxo-3-methylvalerate) and of (2R)-2,3-dihydroxy-3-methylbutanoate (2,3-dihydroxyisovalerate) into 2-oxo-3-methylbutanoate (2-oxoisovalerate), the penultimate precursor to L-isoleucine and L-valine, respectively. This Bacillus thuringiensis subsp. konkukian (strain 97-27) protein is Dihydroxy-acid dehydratase.